The chain runs to 89 residues: Putative membrane protein insertion efficiency factor (89 aa).

The tract at residues 68-89 (VPPPNSDARNAPHEAEASSHRL) is disordered. The segment covering 77–89 (NAPHEAEASSHRL) has biased composition (basic and acidic residues).

Belongs to the UPF0161 family.

Its subcellular location is the cell inner membrane. Could be involved in insertion of integral membrane proteins into the membrane. The sequence is that of Putative membrane protein insertion efficiency factor from Burkholderia mallei (strain SAVP1).